Here is a 649-residue protein sequence, read N- to C-terminus: Acetyl-coenzyme A synthetase (649 aa).

CoA-binding positions include arginine 198–lysine 201, threonine 317, and asparagine 341. ATP contacts are provided by residues glycine 393–proline 395, aspartate 417–threonine 422, aspartate 506, and arginine 521. CoA is bound at residue serine 529. Arginine 532 contributes to the ATP binding site. Mg(2+)-binding residues include valine 543, histidine 545, and valine 548. Lysine 612 is modified (N6-acetyllysine). The tract at residues glutamine 625 to leucine 649 is disordered.

The protein belongs to the ATP-dependent AMP-binding enzyme family. Mg(2+) is required as a cofactor. Acetylated. Deacetylation by the SIR2-homolog deacetylase activates the enzyme.

The catalysed reaction is acetate + ATP + CoA = acetyl-CoA + AMP + diphosphate. Its function is as follows. Catalyzes the conversion of acetate into acetyl-CoA (AcCoA), an essential intermediate at the junction of anabolic and catabolic pathways. AcsA undergoes a two-step reaction. In the first half reaction, AcsA combines acetate with ATP to form acetyl-adenylate (AcAMP) intermediate. In the second half reaction, it can then transfer the acetyl group from AcAMP to the sulfhydryl group of CoA, forming the product AcCoA. The chain is Acetyl-coenzyme A synthetase from Deinococcus radiodurans (strain ATCC 13939 / DSM 20539 / JCM 16871 / CCUG 27074 / LMG 4051 / NBRC 15346 / NCIMB 9279 / VKM B-1422 / R1).